A 409-amino-acid polypeptide reads, in one-letter code: Transforming growth factor beta-3 proprotein (409 aa).

The N-terminal stretch at 1 to 21 (MHLQRALVVLALLNFATVSLS) is a signal peptide. N-linked (GlcNAc...) asparagine glycans are attached at residues Asn-72, Asn-133, and Asn-140. Positions 259–261 (RGD) match the Cell attachment site motif. Cystine bridges form between Cys-304-Cys-313, Cys-312-Cys-375, Cys-341-Cys-406, and Cys-345-Cys-408.

The protein belongs to the TGF-beta family. As to quaternary structure, interacts with ASPN. Latency-associated peptide: Homodimer; disulfide-linked. Latency-associated peptide: Interacts with Transforming growth factor beta-3 (TGF-beta-3) chain; interaction is non-covalent and maintains (TGF-beta-3) in a latent state. Latency-associated peptide: Interacts with LRRC32/GARP; leading to regulate activation of TGF-beta-3 and promote epithelial fusion during palate development. Latency-associated peptide: Interacts (via cell attachment site) with integrins, leading to release of the active TGF-beta-3. Transforming growth factor beta-3: Homodimer; disulfide-linked. Transforming growth factor beta-3: Interacts with TGF-beta receptors (TGFBR1 and TGFBR2), leading to signal transduction. In terms of processing, transforming growth factor beta-3 proprotein: The precursor proprotein is cleaved in the Golgi apparatus to form Transforming growth factor beta-3 (TGF-beta-3) and Latency-associated peptide (LAP) chains, which remain non-covalently linked, rendering TGF-beta-3 inactive.

It is found in the secreted. Its subcellular location is the extracellular space. It localises to the extracellular matrix. In terms of biological role, transforming growth factor beta-3 proprotein: Precursor of the Latency-associated peptide (LAP) and Transforming growth factor beta-3 (TGF-beta-3) chains, which constitute the regulatory and active subunit of TGF-beta-3, respectively. Its function is as follows. Required to maintain the Transforming growth factor beta-3 (TGF-beta-3) chain in a latent state during storage in extracellular matrix. Associates non-covalently with TGF-beta-3 and regulates its activation via interaction with 'milieu molecules', such as LTBP1 and LRRC32/GARP, that control activation of TGF-beta-3. Interaction with integrins results in distortion of the Latency-associated peptide chain and subsequent release of the active TGF-beta-3. Functionally, transforming growth factor beta-3: Multifunctional protein that regulates embryogenesis and cell differentiation and is required in various processes such as secondary palate development. Activation into mature form follows different steps: following cleavage of the proprotein in the Golgi apparatus, Latency-associated peptide (LAP) and Transforming growth factor beta-3 (TGF-beta-3) chains remain non-covalently linked rendering TGF-beta-3 inactive during storage in extracellular matrix. At the same time, LAP chain interacts with 'milieu molecules', such as LTBP1 and LRRC32/GARP that control activation of TGF-beta-3 and maintain it in a latent state during storage in extracellular milieus. TGF-beta-3 is released from LAP by integrins: integrin-binding results in distortion of the LAP chain and subsequent release of the active TGF-beta-3. Once activated following release of LAP, TGF-beta-3 acts by binding to TGF-beta receptors (TGFBR1 and TGFBR2), which transduce signal. This chain is Transforming growth factor beta-3 proprotein (TGFB3), found in Sus scrofa (Pig).